A 78-amino-acid chain; its full sequence is Small ribosomal subunit protein bS18 (78 aa).

This sequence belongs to the bacterial ribosomal protein bS18 family. As to quaternary structure, part of the 30S ribosomal subunit. Forms a tight heterodimer with protein bS6.

Functionally, binds as a heterodimer with protein bS6 to the central domain of the 16S rRNA, where it helps stabilize the platform of the 30S subunit. In Lactobacillus delbrueckii subsp. bulgaricus (strain ATCC BAA-365 / Lb-18), this protein is Small ribosomal subunit protein bS18.